The primary structure comprises 165 residues: Pro-MCH (165 aa).

Positions 1-21 (MAKMTLSSYMLMLAFSLFSQG) are cleaved as a signal peptide. A disordered region spans residues 66–89 (YKNDESGFMNDDDNKNSKNTGSKQ). Residue Ile-143 is modified to Isoleucine amide. Cys-153 and Cys-162 form a disulfide bridge.

The protein belongs to the MCH family. Pro-MCH is processed differentially in the brain and in peripheral organs producing two neuropeptides; NEI and MCH. A third peptide, NGE, may also be produced. Preferential processing in neurons by prohormone convertase 2 (PC2) generates NEI. MCH is generated in neurons of the lateral hypothalmic area by several prohormone convertases including PC1/3, PC2 and PC5/6. As to expression, predominantly expressed in hypothalamus. Also found in heart, intestine, spleen and testis (spermatogonia, early spermatocytes and Sertoli cells). In brain only mature MCH and NEI peptides are present. In peripheral tissues a large product, encompassing the NEI and MCH domains of the precursor, is found predominantly.

The protein localises to the secreted. Its function is as follows. MCH may act as a neurotransmitter or neuromodulator in a broad array of neuronal functions directed toward the regulation of goal-directed behavior, such as food intake, and general arousal. The sequence is that of Pro-MCH (Pmch) from Mus musculus (Mouse).